The primary structure comprises 550 residues: Chaperonin GroEL (550 aa).

ATP-binding positions include 30–33 (TLGP), Lys51, 87–91 (DGTTT), Gly415, and Asp495.

This sequence belongs to the chaperonin (HSP60) family. As to quaternary structure, forms a cylinder of 14 subunits composed of two heptameric rings stacked back-to-back. Interacts with the co-chaperonin GroES.

It is found in the cytoplasm. The enzyme catalyses ATP + H2O + a folded polypeptide = ADP + phosphate + an unfolded polypeptide.. Its function is as follows. Together with its co-chaperonin GroES, plays an essential role in assisting protein folding. The GroEL-GroES system forms a nano-cage that allows encapsulation of the non-native substrate proteins and provides a physical environment optimized to promote and accelerate protein folding. This is Chaperonin GroEL from Shewanella woodyi (strain ATCC 51908 / MS32).